We begin with the raw amino-acid sequence, 140 residues long: Pro-vaccinia growth factor (140 aa).

The N-terminal stretch at 1 to 18 (MLINYLMLLFAAMIIRSF) is a signal peptide. At 19–100 (ADSGNAIETT…SEKPNTTTSY (82 aa)) the chain is on the extracellular side. N-linked (GlcNAc...) asparagine; by host glycosylation occurs at N34. The region spanning 41 to 81 (AIRLCGPEGDGYCLHGDCIHARDIDGMYCRCSHGYTGIRCQ) is the EGF-like domain. 3 cysteine pairs are disulfide-bonded: C45/C58, C53/C69, and C71/C80. N95 carries an N-linked (GlcNAc...) asparagine; by host glycan. The helical transmembrane segment at 101–121 (IPSPGIMLVLVGIIIITCCLL) threads the bilayer. Residues 122 to 140 (SVYRFTRRTKLPLQDMVVP) are Cytoplasmic-facing.

Belongs to the orthopoxvirus OPG019 family. In terms of assembly, vaccinia growth factor interacts with host EGFR and promotes EGFR dimerization.

Its subcellular location is the host membrane. The protein localises to the secreted. Functionally, stimulates cellular proliferation (hyperplasia)and mobility around infected cells to promote rapid and efficient spread of infection. This effect is beneficial for virus replication in vivo, because poxviruses replicate possibly better in proliferating cells than in quiescent cells. Acts by binding host EGFR, inducing its dimerization, autophosphorylation and leading to activation of several cellular pathways regulating cell proliferation or cell survival. The activation by host EGFR of mitogen activated protein kinases (MAPK) and extracellular-signal regulated kinases (ERK) are essential for the positive effect of vaccinia growth factor on poxvirus virulence in vivo. The polypeptide is Pro-vaccinia growth factor (OPG019) (Homo sapiens (Human)).